A 255-amino-acid polypeptide reads, in one-letter code: Aliphatic sulfonates import ATP-binding protein SsuB (255 aa).

The ABC transporter domain occupies 12–233; it reads LLLNAVSKHY…RLGSVRLAEL (222 aa). 44-51 contributes to the ATP binding site; the sequence is GRSGGGKS.

It belongs to the ABC transporter superfamily. Aliphatic sulfonates importer (TC 3.A.1.17.2) family. As to quaternary structure, the complex is composed of two ATP-binding proteins (SsuB), two transmembrane proteins (SsuC) and a solute-binding protein (SsuA).

It localises to the cell inner membrane. The catalysed reaction is ATP + H2O + aliphatic sulfonate-[sulfonate-binding protein]Side 1 = ADP + phosphate + aliphatic sulfonateSide 2 + [sulfonate-binding protein]Side 1.. Its function is as follows. Part of the ABC transporter complex SsuABC involved in aliphatic sulfonates import. Responsible for energy coupling to the transport system. The chain is Aliphatic sulfonates import ATP-binding protein SsuB from Escherichia coli O1:K1 / APEC.